Consider the following 344-residue polypeptide: Methionine import ATP-binding protein MetN (344 aa).

Positions 7-245 (ISLKKISRCF…PQDDTTIAML (239 aa)) constitute an ABC transporter domain. 42-49 (GRSGAGKS) contributes to the ATP binding site.

It belongs to the ABC transporter superfamily. Methionine importer (TC 3.A.1.24) family. As to quaternary structure, the complex is composed of two ATP-binding proteins (MetN), two transmembrane proteins (MetI) and a solute-binding protein (MetQ).

The protein resides in the cell inner membrane. It catalyses the reaction L-methionine(out) + ATP + H2O = L-methionine(in) + ADP + phosphate + H(+). It carries out the reaction D-methionine(out) + ATP + H2O = D-methionine(in) + ADP + phosphate + H(+). Its function is as follows. Part of the ABC transporter complex MetNIQ involved in methionine import. Responsible for energy coupling to the transport system. This chain is Methionine import ATP-binding protein MetN, found in Bartonella henselae (strain ATCC 49882 / DSM 28221 / CCUG 30454 / Houston 1) (Rochalimaea henselae).